Here is a 242-residue protein sequence, read N- to C-terminus: Purine nucleoside phosphorylase SCO2081 (242 aa).

H68, C106, and H123 together coordinate Zn(2+).

It belongs to the purine nucleoside phosphorylase YfiH/LACC1 family. Homodimer. Cu(2+) serves as cofactor. It depends on Zn(2+) as a cofactor.

The enzyme catalyses adenosine + phosphate = alpha-D-ribose 1-phosphate + adenine. It carries out the reaction S-methyl-5'-thioadenosine + phosphate = 5-(methylsulfanyl)-alpha-D-ribose 1-phosphate + adenine. It catalyses the reaction inosine + phosphate = alpha-D-ribose 1-phosphate + hypoxanthine. The catalysed reaction is adenosine + H2O + H(+) = inosine + NH4(+). Functionally, purine nucleoside enzyme that catalyzes the phosphorolysis of adenosine and inosine nucleosides, yielding D-ribose 1-phosphate and the respective free bases, adenine and hypoxanthine. Also catalyzes the phosphorolysis of S-methyl-5'-thioadenosine into adenine and S-methyl-5-thio-alpha-D-ribose 1-phosphate. Also has adenosine deaminase activity. This is Purine nucleoside phosphorylase SCO2081 from Streptomyces coelicolor (strain ATCC BAA-471 / A3(2) / M145).